The following is a 551-amino-acid chain: Tetrachloroethene reductive dehalogenase (551 aa).

The segment at residues 1 to 39 is a signal peptide (tat-type signal); sequence MGEINRRNFLKASMLGAAAAAVASASVVKGVVSPLVADA. The 4Fe-4S ferredoxin-type 1 domain maps to 411-440; the sequence is PRKFGVREFCRLCKKCADACPAQAISHEKD. Residues cysteine 420, cysteine 423, cysteine 426, cysteine 430, cysteine 467, cysteine 478, cysteine 481, and cysteine 485 each coordinate [4Fe-4S] cluster. In terms of domain architecture, 4Fe-4S ferredoxin-type 2 spans 478-496; sequence CSNCVAVCSWNKVETWNHD.

Belongs to the PceA family. [4Fe-4S] cluster is required as a cofactor. It depends on corrinoid as a cofactor. Post-translationally, predicted to be exported by the Tat system. The position of the signal peptide cleavage has been experimentally proven.

The protein resides in the cell membrane. The enzyme catalyses trichloroethene + chloride + A + H(+) = tetrachloroethene + AH2. It carries out the reaction trichloroethene + AH2 = (Z)-1,2-dichloroethene + chloride + A + H(+). Its function is as follows. Catalyzes the reductive dechlorination of tetrachloroethene (PCE) to trichloroethene (TCE) and of trichloroethene to cis-1,2-dichloroethene (DCE). Reduced methyl viologen can act as the artificial electron donor. The chain is Tetrachloroethene reductive dehalogenase from Desulfitobacterium hafniense (Desulfitobacterium frappieri).